Reading from the N-terminus, the 118-residue chain is Basic phospholipase A2 CM-II (118 aa).

7 disulfides stabilise this stretch: C11/C70, C26/C117, C28/C44, C43/C98, C50/C91, C59/C84, and C77/C89. Y27, G29, and G31 together coordinate Ca(2+). The active site involves H47. D48 contributes to the Ca(2+) binding site. The active site involves D92.

It belongs to the phospholipase A2 family. Group I subfamily. D49 sub-subfamily. Ca(2+) is required as a cofactor. In terms of tissue distribution, expressed by the venom gland.

Its subcellular location is the secreted. The catalysed reaction is a 1,2-diacyl-sn-glycero-3-phosphocholine + H2O = a 1-acyl-sn-glycero-3-phosphocholine + a fatty acid + H(+). In terms of biological role, snake venom phospholipase A2 (PLA2) that causes myonecrosis when injected intramuscularly, causes neuromuscular blockade with a gradual contracture and a decreased sensitivity to ACh and KCl (in the chick biventer cervicis nerve-muscle preparation), abolishes twitches evoked by indirect stimulation earlier than those by direct stimulation (in the mouse phrenic nerve-diaphragm preparation), shows indirect hemolytic activity, and shows weak anticoagulant activity. PLA2 catalyzes the calcium-dependent hydrolysis of the 2-acyl groups in 3-sn-phosphoglycerides. In Naja mossambica (Mozambique spitting cobra), this protein is Basic phospholipase A2 CM-II.